The primary structure comprises 553 residues: Serine/threonine-protein phosphatase 2B catalytic subunit A1 (553 aa).

Ser-2 carries the post-translational modification N-acetylserine. Residues Asp-119, His-121, and Asp-147 each contribute to the Fe cation site. Asp-147 and Asn-179 together coordinate Zn(2+). Residue His-180 is the Proton donor of the active site. Zn(2+)-binding residues include His-228 and His-317. A disordered region spans residues 413 to 447 (LDPESEPKAAEETVKARANATKETGTPSDEKASSA). A compositionally biased stretch (basic and acidic residues) spans 417 to 427 (SEPKAAEETVK).

It belongs to the PPP phosphatase family. PP-2B subfamily. Composed of two components (A and B), the A component is the catalytic subunit and the B component confers calcium sensitivity. Requires Fe(3+) as cofactor. Zn(2+) is required as a cofactor.

The enzyme catalyses O-phospho-L-seryl-[protein] + H2O = L-seryl-[protein] + phosphate. The catalysed reaction is O-phospho-L-threonyl-[protein] + H2O = L-threonyl-[protein] + phosphate. Functionally, calcium-dependent, calmodulin-stimulated protein phosphatase. This subunit may have a role in the calmodulin activation of calcineurin. The protein is Serine/threonine-protein phosphatase 2B catalytic subunit A1 (CNA1) of Saccharomyces cerevisiae (strain ATCC 204508 / S288c) (Baker's yeast).